Reading from the N-terminus, the 777-residue chain is UPF0313 protein VP1980 (777 aa).

A Radical SAM core domain is found at 363–642 (AYDMIKTSVN…KALLRYHDPA (280 aa)). The [4Fe-4S] cluster site is built by Cys377, Cys381, and Cys384. The interval 675-777 (AQTPAQRRKS…PAGQRKPKRR (103 aa)) is disordered. Basic residues predominate over residues 680–698 (QRRKSGRHGANRFATKHTK). Basic and acidic residues predominate over residues 709-719 (KRAEGGSKDGK). Residues 736-747 (PASNGQRPSGNG) show a composition bias toward polar residues. A compositionally biased stretch (low complexity) spans 755 to 769 (KPQGQGRPQGQGKPA).

The protein belongs to the UPF0313 family. It depends on [4Fe-4S] cluster as a cofactor.

This Vibrio parahaemolyticus serotype O3:K6 (strain RIMD 2210633) protein is UPF0313 protein VP1980.